A 168-amino-acid chain; its full sequence is Cytochrome c-type biogenesis protein CcmE (168 aa).

Residues 1–7 (MTRKQRR) lie on the Cytoplasmic side of the membrane. Residues 8–28 (LMLIGVCGAVLAVALGLVLWA) traverse the membrane as a helical; Signal-anchor for type II membrane protein segment. Topologically, residues 29–168 (MRGTIVFFRS…SGEKPALRQQ (140 aa)) are periplasmic. Heme is bound by residues H122 and Y126. Residues 134-168 (ALKKQGHWQGEAKHPGGTAPAPQTASGEKPALRQQ) form a disordered region.

It belongs to the CcmE/CycJ family.

The protein localises to the cell inner membrane. Its function is as follows. Heme chaperone required for the biogenesis of c-type cytochromes. Transiently binds heme delivered by CcmC and transfers the heme to apo-cytochromes in a process facilitated by CcmF and CcmH. This is Cytochrome c-type biogenesis protein CcmE from Methylobacterium nodulans (strain LMG 21967 / CNCM I-2342 / ORS 2060).